Reading from the N-terminus, the 252-residue chain is MTTRRKKIYEGKAKILYEGPEPGTLIQYFKDDATAFNAQKKAILEGKGVINNRISEYIMTRLNGIGVQNHFIRRLNLREQLIKEVEIVPLEVVVRNIAAGSIATRLGLTEGQPLPRSIIEFYYKDDKLGDPMVTEEHITAFNWAATQEIDDMMAMALRVNDYLSGLFAGVGITLVDFKVEFGRVYEGDFSRVILADEISPDSCRLWDTVTNEKLDKDRFRRDLGNVIESYTEVARRLGIMKEMPTVIQGGVH.

This sequence belongs to the SAICAR synthetase family.

It catalyses the reaction 5-amino-1-(5-phospho-D-ribosyl)imidazole-4-carboxylate + L-aspartate + ATP = (2S)-2-[5-amino-1-(5-phospho-beta-D-ribosyl)imidazole-4-carboxamido]succinate + ADP + phosphate + 2 H(+). The protein operates within purine metabolism; IMP biosynthesis via de novo pathway; 5-amino-1-(5-phospho-D-ribosyl)imidazole-4-carboxamide from 5-amino-1-(5-phospho-D-ribosyl)imidazole-4-carboxylate: step 1/2. This is Phosphoribosylaminoimidazole-succinocarboxamide synthase 1 (purC1) from Caulobacter vibrioides (strain ATCC 19089 / CIP 103742 / CB 15) (Caulobacter crescentus).